The following is a 433-amino-acid chain: ACT domain-containing protein ACR6 (433 aa).

ACT domains follow at residues 30–110 (VIQV…RSSV), 120–207 (SIEL…SCSD), 250–326 (VVTM…ASEG), and 328–402 (ELEL…VKKK).

Functionally, may bind amino acids. The polypeptide is ACT domain-containing protein ACR6 (Arabidopsis thaliana (Mouse-ear cress)).